Reading from the N-terminus, the 445-residue chain is tRNA modification GTPase MnmE (445 aa).

Residues Arg20, Glu79, and Lys119 each coordinate (6S)-5-formyl-5,6,7,8-tetrahydrofolate. The region spanning 215–371 (GLKLAIIGPP…ILKNIEEIAE (157 aa)) is the TrmE-type G domain. Asn225 provides a ligand contact to K(+). Residues 225–230 (NAGKSS), 244–250 (SNIAGTT), and 269–272 (DTAG) each bind GTP. Residue Ser229 participates in Mg(2+) binding. The K(+) site is built by Ser244, Ile246, and Thr249. Thr250 serves as a coordination point for Mg(2+). Lys445 contributes to the (6S)-5-formyl-5,6,7,8-tetrahydrofolate binding site.

This sequence belongs to the TRAFAC class TrmE-Era-EngA-EngB-Septin-like GTPase superfamily. TrmE GTPase family. In terms of assembly, homodimer. Heterotetramer of two MnmE and two MnmG subunits. The cofactor is K(+).

It localises to the cytoplasm. Its function is as follows. Exhibits a very high intrinsic GTPase hydrolysis rate. Involved in the addition of a carboxymethylaminomethyl (cmnm) group at the wobble position (U34) of certain tRNAs, forming tRNA-cmnm(5)s(2)U34. This is tRNA modification GTPase MnmE from Rickettsia bellii (strain RML369-C).